We begin with the raw amino-acid sequence, 243 residues long: Homeobox protein goosecoid isoform A (243 aa).

The segment at residues Lys148–Lys207 is a DNA-binding region (homeobox). The interval Ala201–Ser243 is disordered. Positions Ala217–Asn226 are enriched in polar residues. Basic and acidic residues predominate over residues Ser227–Ser243.

This sequence belongs to the paired homeobox family. Bicoid subfamily. At the start of gastrulation, it is found in a patch of cells encompassing 60 degrees of arc on the dorsal marginal zone.

The protein resides in the nucleus. Functionally, plays a central role in executing Spemann's organizer phenomenon (the dorsal blastopore lip of the early Xenopus laevis gastrula can organize a complete secondary body axis when transplanted to another embryo). The protein is Homeobox protein goosecoid isoform A (gsc-a) of Xenopus laevis (African clawed frog).